Consider the following 104-residue polypeptide: Large ribosomal subunit protein bL21 (104 aa).

This sequence belongs to the bacterial ribosomal protein bL21 family. In terms of assembly, part of the 50S ribosomal subunit. Contacts protein L20.

Its function is as follows. This protein binds to 23S rRNA in the presence of protein L20. The chain is Large ribosomal subunit protein bL21 from Kosmotoga olearia (strain ATCC BAA-1733 / DSM 21960 / TBF 19.5.1).